A 368-amino-acid chain; its full sequence is Phosphate acyltransferase (368 aa).

Residues 335–368 (VSLGDGEHDAGGAGHTGPAAGQHAEPPAAQSSKA) form a disordered region.

Belongs to the PlsX family. In terms of assembly, homodimer. Probably interacts with PlsY.

It is found in the cytoplasm. The catalysed reaction is a fatty acyl-[ACP] + phosphate = an acyl phosphate + holo-[ACP]. It functions in the pathway lipid metabolism; phospholipid metabolism. Catalyzes the reversible formation of acyl-phosphate (acyl-PO(4)) from acyl-[acyl-carrier-protein] (acyl-ACP). This enzyme utilizes acyl-ACP as fatty acyl donor, but not acyl-CoA. The protein is Phosphate acyltransferase of Burkholderia vietnamiensis (strain G4 / LMG 22486) (Burkholderia cepacia (strain R1808)).